A 1487-amino-acid chain; its full sequence is Secretory phospholipase A2 receptor (1487 aa).

The N-terminal stretch at 1 to 26 (MVQWLAMLQLLWLQQLLLLGIHQGIA) is a signal peptide. Residues 27–1396 (QDLTHIQEPS…AQPEKGLSHS (1370 aa)) are Extracellular-facing. Residues 42 to 165 (KGIFIIQSES…SSGGDICEHP (124 aa)) form the Ricin B-type lectin domain. 4 disulfide bridges follow: cysteine 55–cysteine 68, cysteine 93–cysteine 110, cysteine 181–cysteine 207, and cysteine 195–cysteine 222. N-linked (GlcNAc...) asparagine glycosylation occurs at asparagine 97. Residues 176–224 (AHGMPCVFPFQFKGHWHHDCIREGQKEHLLWCATTSRYEEDEKWGFCPD) form the Fibronectin type-II domain. Asparagine 239 carries an N-linked (GlcNAc...) asparagine glycan. 6 consecutive C-type lectin domains span residues 241–357 (SSRI…YICK), 387–504 (FNRK…YICK), 524–643 (HGRF…MSLC), 673–797 (GLAS…WICR), 819–938 (YQNA…SICK), and 964–1095 (FNYK…GFVC). Intrachain disulfides connect cysteine 263–cysteine 356, cysteine 333–cysteine 348, cysteine 408–cysteine 503, cysteine 480–cysteine 495, cysteine 617–cysteine 634, cysteine 699–cysteine 796, cysteine 774–cysteine 788, cysteine 840–cysteine 937, cysteine 914–cysteine 929, and cysteine 1066–cysteine 1086. Asparagine 928 is a glycosylation site (N-linked (GlcNAc...) asparagine). 3 N-linked (GlcNAc...) asparagine glycosylation sites follow: asparagine 1107, asparagine 1122, and asparagine 1131. C-type lectin domains are found at residues 1120-1231 (YGNR…GAIC) and 1256-1377 (FKGN…FICK). Disulfide bonds link cysteine 1208–cysteine 1222, cysteine 1279–cysteine 1376, and cysteine 1353–cysteine 1368. A helical transmembrane segment spans residues 1397–1417 (IVPVTVTLTLIIALGIFMLCF). Residues 1418–1487 (WIYKQKSDIF…HKGRPICISP (70 aa)) lie on the Cytoplasmic side of the membrane. The Endocytosis signal signature appears at 1435–1441 (GSYYPTL). The segment covering 1463–1475 (DEEVRDAPATESK) has biased composition (basic and acidic residues). The interval 1463–1487 (DEEVRDAPATESKRGHKGRPICISP) is disordered.

Interacts with sPLA2-IB/PLA2G1B; this interaction mediates intracellular signaling as well as clearance of extracellular sPLA2-IB/PLA2G1B via endocytotic pathway. Interacts with sPLA2-X/PLA2G10; this interaction mediates sPLA2-X/PLA2G10 clearance and inactivation. The secretory phospholipase A2 receptor form may be produced by the action of metalloproteinases. It contains all extracellular domains and only lacks transmembrane and cytosolic regions. It is however unclear whether this form is produced by proteolytic cleavage as suggested by some experiments reported by PubMed:11830583, or by alternative splicing. As to expression, widely expressed. Present in type II alveolar epithelial cells and a subset of splenic lymphocytes. Present at the surface of polymorphonuclear neutrophils (at protein level).

Its subcellular location is the cell membrane. It localises to the secreted. Its function is as follows. Receptor for secretory phospholipase A2 (sPLA2). Acts as a receptor for phospholipases sPLA2-IB/PLA2G1B, sPLA2-X/PLA2G10 and, with lower affinity, sPLA2-IIA/PLA2G2A. Also able to bind to snake PA2-like toxins. Although its precise function remains unclear, binding of sPLA2 to its receptor participates in both positive and negative regulation of sPLA2 functions as well as clearance of sPLA2. Binding of sPLA2-IB/PLA2G1B induces various effects depending on the cell type, such as activation of the mitogen-activated protein kinase (MAPK) cascade to induce cell proliferation, the production of lipid mediators, selective release of arachidonic acid in bone marrow-derived mast cells. In neutrophils, binding of sPLA2-IB/PLA2G1B can activate p38 MAPK to stimulate elastase release and cell adhesion. May be involved in responses in pro-inflammatory cytokine productions during endotoxic shock. Also has endocytic properties and rapidly internalizes sPLA2 ligands, which is particularly important for the clearance of extracellular sPLA2s to protect their potent enzymatic activities. The soluble secretory phospholipase A2 receptor form is circulating and acts as a negative regulator of sPLA2 functions by blocking the biological functions of sPLA2-IB/PLA2G1B and sPLA2-X/PLA2G10. In podocytes, binding of sPLA2-IB/PLA2G1B can regulate podocyte survival and glomerular homeostasis. In Mus musculus (Mouse), this protein is Secretory phospholipase A2 receptor (Pla2r1).